Reading from the N-terminus, the 521-residue chain is Na(+)/H(+) antiporter ApNhaP (521 aa).

The Periplasmic portion of the chain corresponds to 1–18 (MTIEAAMGEEAIKENLEQ). Residues 19-39 (FLIVLSVSLGVATLSQISSFF) traverse the membrane as a helical segment. The Cytoplasmic portion of the chain corresponds to 40–41 (RQ). Residues 42–62 (IPYTLLLVIVGLGLAFVDIRL) form a helical membrane-spanning segment. Residues 63–94 (VNLSPELILEIFLPPLLFEAAWNIRWRNLKKN) are Periplasmic-facing. Residues 95 to 115 (LFPVVLLAIIGVVISVVGIGF) traverse the membrane as a helical segment. At 116 to 126 (SLNYFSGLSLP) the chain is on the cytoplasmic side. The helical transmembrane segment at 127 to 147 (IALLVGAILAATDPVSVIALF) threads the bilayer. The Periplasmic segment spans residues 148–164 (RELGVGERLTVLMEGES). Residues 165-185 (LFNDGVAVVAFSLLVGIPLGT) traverse the membrane as a helical segment. The Cytoplasmic segment spans residues 186–194 (QEFSVTNTL). The helical transmembrane segment at 195–215 (IQFVTLQGIGIGCGGVIGFGI) threads the bilayer. Over 216–245 (SYLTQRFDLPLVEQSLTLVSAYGTYLITEE) the chain is Periplasmic. A helical transmembrane segment spans residues 246-266 (LGGSGVIGVVTVGLILGNFGS). The Cytoplasmic segment spans residues 267–276 (RIGMNPRTRL). The chain crosses the membrane as a helical span at residues 277–297 (LVSEFWEFIAFFVNSIVFLLI). Over 298–311 (GDQINIRGLADNGQ) the chain is Periplasmic. The chain crosses the membrane as a helical span at residues 312–332 (LILITIIALVIIRAISIYGLG). Over 333–349 (TISNLITKQDISWQEET) the chain is Cytoplasmic. A helical membrane pass occupies residues 350 to 370 (VLWWGGLRGSVSIALALSVPV). Topologically, residues 371 to 380 (MLDGRQDIIE) are periplasmic. A helical transmembrane segment spans residues 381–401 (AVFGVVLFTLLVQGLTMQTVI). The Cytoplasmic segment spans residues 402–521 (EKLGLIGDRA…LLQEVLAKPE (120 aa)).

It belongs to the monovalent cation:proton antiporter 1 (CPA1) transporter (TC 2.A.36) family.

The protein localises to the cell inner membrane. In terms of biological role, na(+)/H(+) antiporter that extrudes sodium in exchange for external protons. Also shows high Ca(2+)/H(+) antiporter activity at alkaline pH. Does not catalyze exchange between Li(+) and H(+). The protein is Na(+)/H(+) antiporter ApNhaP (apnhaP) of Aphanothece halophytica.